We begin with the raw amino-acid sequence, 156 residues long: SsrA-binding protein (156 aa).

It belongs to the SmpB family.

It is found in the cytoplasm. Required for rescue of stalled ribosomes mediated by trans-translation. Binds to transfer-messenger RNA (tmRNA), required for stable association of tmRNA with ribosomes. tmRNA and SmpB together mimic tRNA shape, replacing the anticodon stem-loop with SmpB. tmRNA is encoded by the ssrA gene; the 2 termini fold to resemble tRNA(Ala) and it encodes a 'tag peptide', a short internal open reading frame. During trans-translation Ala-aminoacylated tmRNA acts like a tRNA, entering the A-site of stalled ribosomes, displacing the stalled mRNA. The ribosome then switches to translate the ORF on the tmRNA; the nascent peptide is terminated with the 'tag peptide' encoded by the tmRNA and targeted for degradation. The ribosome is freed to recommence translation, which seems to be the essential function of trans-translation. This chain is SsrA-binding protein, found in Lactiplantibacillus plantarum (strain ATCC BAA-793 / NCIMB 8826 / WCFS1) (Lactobacillus plantarum).